The primary structure comprises 426 residues: MNQSAQLFSRARSVIPGGVNSPVRAFRNVDGDPFFVQSAKGAYITDADGRQLIDYIGTWGPAILGHAPQPVLDAVHAAVDRGLGYGIPAPAEVDMAEMITDMVPSVEKVRMVNSGTEATMSAIRLARGYTGRRKIIKFIGCYHGHVDSLLVAAGSGALTFGEPDSAGVPREMTQLTLTVPYNDREAVKKAFELHGSDIAAVILEPFPANAGLYFPQNDFLHFLREITLRHDTLLIFDEVMTGFRVAPGGVQQLYGITPDLTCMGKVIGGGLPVGAFGGRSEIMDCLSPLGPVYQAGTLSGNPVAMAAGLAQLRELLKGNAYERLEQLGARMEEGIREALKKHGRNYTFHRAGSMFCLFFTEEEVYNLESAQKASKKLFKSFFWNMLEQGVYFAPSPYETGFISTAHTEEDIDRTVEAVRISLSRLG.

N6-(pyridoxal phosphate)lysine is present on Lys265.

This sequence belongs to the class-III pyridoxal-phosphate-dependent aminotransferase family. HemL subfamily. Homodimer. Pyridoxal 5'-phosphate serves as cofactor.

It localises to the cytoplasm. The catalysed reaction is (S)-4-amino-5-oxopentanoate = 5-aminolevulinate. It participates in porphyrin-containing compound metabolism; protoporphyrin-IX biosynthesis; 5-aminolevulinate from L-glutamyl-tRNA(Glu): step 2/2. In Akkermansia muciniphila (strain ATCC BAA-835 / DSM 22959 / JCM 33894 / BCRC 81048 / CCUG 64013 / CIP 107961 / Muc), this protein is Glutamate-1-semialdehyde 2,1-aminomutase.